The chain runs to 97 residues: Co-chaperonin GroES (97 aa).

This sequence belongs to the GroES chaperonin family. Heptamer of 7 subunits arranged in a ring. Interacts with the chaperonin GroEL.

It localises to the cytoplasm. Functionally, together with the chaperonin GroEL, plays an essential role in assisting protein folding. The GroEL-GroES system forms a nano-cage that allows encapsulation of the non-native substrate proteins and provides a physical environment optimized to promote and accelerate protein folding. GroES binds to the apical surface of the GroEL ring, thereby capping the opening of the GroEL channel. The polypeptide is Co-chaperonin GroES (Tolumonas auensis (strain DSM 9187 / NBRC 110442 / TA 4)).